Reading from the N-terminus, the 146-residue chain is 3-dehydroquinate dehydratase (146 aa).

The active-site Proton acceptor is the Y22. N73, H79, and D86 together coordinate substrate. The Proton donor role is filled by H99. Residues 100 to 101 (IS) and R110 contribute to the substrate site.

Belongs to the type-II 3-dehydroquinase family. Homododecamer.

It carries out the reaction 3-dehydroquinate = 3-dehydroshikimate + H2O. The protein operates within metabolic intermediate biosynthesis; chorismate biosynthesis; chorismate from D-erythrose 4-phosphate and phosphoenolpyruvate: step 3/7. Catalyzes a trans-dehydration via an enolate intermediate. This is 3-dehydroquinate dehydratase from Prochlorococcus marinus (strain MIT 9515).